The chain runs to 299 residues: uncharacterized protein (299 aa).

Catalysis depends on charge relay system residues Thr-47 and Tyr-109. Tyr-138 functions as the Proton donor in the catalytic mechanism. Lys-168 functions as the Schiff-base intermediate with substrate in the catalytic mechanism.

It belongs to the DapA family. As to quaternary structure, homotetramer.

It localises to the cytoplasm. This is an uncharacterized protein from Chloroflexus aurantiacus (strain ATCC 29366 / DSM 635 / J-10-fl).